Consider the following 293-residue polypeptide: Ribonuclease HIII (293 aa).

In terms of domain architecture, RNase H type-2 spans 78–293 (LPLIGTDEVG…TEKAKKRLER (216 aa)). Positions 84, 85, and 187 each coordinate a divalent metal cation.

This sequence belongs to the RNase HII family. RnhC subfamily. The cofactor is Mn(2+). It depends on Mg(2+) as a cofactor.

Its subcellular location is the cytoplasm. The enzyme catalyses Endonucleolytic cleavage to 5'-phosphomonoester.. In terms of biological role, endonuclease that specifically degrades the RNA of RNA-DNA hybrids. The sequence is that of Ribonuclease HIII (rnhC) from Streptococcus pneumoniae serotype 4 (strain ATCC BAA-334 / TIGR4).